Here is a 556-residue protein sequence, read N- to C-terminus: Arginine--tRNA ligase (556 aa).

Residues 132 to 142 (ANPTGDLHLGH) carry the 'HIGH' region motif.

It belongs to the class-I aminoacyl-tRNA synthetase family. Monomer.

The protein localises to the cytoplasm. It carries out the reaction tRNA(Arg) + L-arginine + ATP = L-arginyl-tRNA(Arg) + AMP + diphosphate. The sequence is that of Arginine--tRNA ligase from Listeria welshimeri serovar 6b (strain ATCC 35897 / DSM 20650 / CCUG 15529 / CIP 8149 / NCTC 11857 / SLCC 5334 / V8).